Reading from the N-terminus, the 115-residue chain is Large ribosomal subunit protein bL19 (115 aa).

It belongs to the bacterial ribosomal protein bL19 family.

In terms of biological role, this protein is located at the 30S-50S ribosomal subunit interface and may play a role in the structure and function of the aminoacyl-tRNA binding site. The polypeptide is Large ribosomal subunit protein bL19 (Syntrophotalea carbinolica (strain DSM 2380 / NBRC 103641 / GraBd1) (Pelobacter carbinolicus)).